Consider the following 319-residue polypeptide: Malate dehydrogenase (319 aa).

NAD(+)-binding positions include 7–13 and Asp-34; that span reads GAAGGIG. 2 residues coordinate substrate: Arg-81 and Arg-87. NAD(+)-binding positions include Asn-94 and 117-119; that span reads ITN. Positions 119 and 153 each coordinate substrate. Residue His-177 is the Proton acceptor of the active site. An NAD(+)-binding site is contributed by Met-227.

The protein belongs to the LDH/MDH superfamily. MDH type 1 family. Homodimer.

It carries out the reaction (S)-malate + NAD(+) = oxaloacetate + NADH + H(+). In terms of biological role, catalyzes the reversible oxidation of malate to oxaloacetate. The protein is Malate dehydrogenase of Psychromonas ingrahamii (strain DSM 17664 / CCUG 51855 / 37).